Reading from the N-terminus, the 256-residue chain is Major prion protein 2 (256 aa).

An N-terminal signal peptide occupies residues 1–24 (MVKSHIGSWILVLFVAMWSDVALC). An interaction with GRB2, ERI3 and SYN1 region spans residues 25 to 233 (KKRPKPGGGW…ESEAYYQRGA (209 aa)). Residues 28 to 110 (PKPGGGWNTG…QWNKPSKPKT (83 aa)) are disordered. A run of 5 repeats spans residues 54 to 62 (PQEGGDWGQ), 63 to 70 (PHGGGWGQ), 71 to 78 (PHVGGWGQ), 79 to 86 (PHGGGWGQ), and 87 to 95 (PHGGGGWGQ). The interval 54 to 95 (PQEGGDWGQPHGGGWGQPHVGGWGQPHGGGWGQPHGGGGWGQ) is 5 X 8 AA tandem repeats of P-H-G-G-G-W-G-Q. Gly residues predominate over residues 58–99 (GDWGQPHGGGWGQPHVGGWGQPHGGGWGQPHGGGGWGQGGTH). Histidine 64, glycine 65, glycine 66, histidine 72, glycine 74, histidine 80, glycine 81, glycine 82, histidine 88, glycine 90, and glycine 91 together coordinate Cu(2+). Cysteine 182 and cysteine 217 are oxidised to a cystine. N-linked (GlcNAc...) asparagine glycosylation is found at asparagine 184 and asparagine 200. Residue alanine 233 is the site of GPI-anchor amidated alanine attachment. The propeptide at 234–256 (SVILFSSPPVILLISFLIFLIVG) is removed in mature form.

Belongs to the prion family. In terms of assembly, monomer and homodimer. Has a tendency to aggregate into amyloid fibrils containing a cross-beta spine, formed by a steric zipper of superposed beta-strands. Soluble oligomers may represent an intermediate stage on the path to fibril formation. Copper binding may promote oligomerization. Interacts with GRB2, APP, ERI3/PRNPIP and SYN1. Mislocalized cytosolically exposed PrP interacts with MGRN1; this interaction alters MGRN1 subcellular location and causes lysosomal enlargement. Interacts with KIAA1191.

It localises to the cell membrane. The protein localises to the golgi apparatus. In terms of biological role, its primary physiological function is unclear. Has cytoprotective activity against internal or environmental stresses. May play a role in neuronal development and synaptic plasticity. May be required for neuronal myelin sheath maintenance. May play a role in iron uptake and iron homeostasis. Soluble oligomers are toxic to cultured neuroblastoma cells and induce apoptosis (in vitro). Association with GPC1 (via its heparan sulfate chains) targets PRNP to lipid rafts. Also provides Cu(2+) or Zn(2+) for the ascorbate-mediated GPC1 deaminase degradation of its heparan sulfate side chains. The sequence is that of Major prion protein 2 from Tragelaphus strepsiceros (Greater kudu).